The sequence spans 329 residues: 4-hydroxythreonine-4-phosphate dehydrogenase (329 aa).

2 residues coordinate substrate: H137 and T138. 3 residues coordinate a divalent metal cation: H167, H212, and H267. Residues K275, N284, and R293 each coordinate substrate.

This sequence belongs to the PdxA family. As to quaternary structure, homodimer. It depends on Zn(2+) as a cofactor. Requires Mg(2+) as cofactor. The cofactor is Co(2+).

The protein localises to the cytoplasm. It catalyses the reaction 4-(phosphooxy)-L-threonine + NAD(+) = 3-amino-2-oxopropyl phosphate + CO2 + NADH. It participates in cofactor biosynthesis; pyridoxine 5'-phosphate biosynthesis; pyridoxine 5'-phosphate from D-erythrose 4-phosphate: step 4/5. Its function is as follows. Catalyzes the NAD(P)-dependent oxidation of 4-(phosphooxy)-L-threonine (HTP) into 2-amino-3-oxo-4-(phosphooxy)butyric acid which spontaneously decarboxylates to form 3-amino-2-oxopropyl phosphate (AHAP). The protein is 4-hydroxythreonine-4-phosphate dehydrogenase of Stutzerimonas stutzeri (strain A1501) (Pseudomonas stutzeri).